A 412-amino-acid polypeptide reads, in one-letter code: Keratin, type I microfibrillar 48 kDa, component 8C-1 (412 aa).

At serine 1 the chain carries N-acetylserine. Residues 1-55 (SFNFCLPNLSFRSSCSSRPCVPSSCCGTTLPGACNIPANVGSCNWFCEGSFDGNE) form a head region. The 312-residue stretch at 55–366 (EKETMQFLND…GLLDSEDCKL (312 aa)) folds into the IF rod domain. The segment at 56–90 (KETMQFLNDRLASYLEKVRQLERENAELESRILER) is coil 1A. The interval 91–101 (SQQQEPLVCPN) is linker 1. Residues 102-202 (YQSYFRTIEE…HEEEVNTLRS (101 aa)) are coil 1B. Residues 203 to 218 (QLGDRLNVEVDAAPTV) form a linker 12 region. Residues 219 to 362 (DLNRVLNETR…NTYRGLLDSE (144 aa)) form a coil 2 region. The interval 363 to 412 (DCKLPCNPCATTNACGKTITPCISSPCAPAAPCTPCVPRSRCGPCNSYVR) is tail.

Belongs to the intermediate filament family.

In terms of biological role, wool microfibrillar keratin. This Ovis aries (Sheep) protein is Keratin, type I microfibrillar 48 kDa, component 8C-1.